A 175-amino-acid chain; its full sequence is MSLREIIILPDKQLRLVSKPVEKVTPEIRQLVDDMFQTMYDAPGIGLAAIQVAQPLRVITMDLAKPDAGGETKREPRVFINPEIIAKSDELSIYEEGCLSIPEYYEEVERPARVRVRFTDLDGVLREEDAEGLYATCIQHEIDHLNGVLFIDYLSKLKRDRVLKKFTKAAKRAGE.

Cys-98 and His-140 together coordinate Fe cation. Glu-141 is an active-site residue. His-144 lines the Fe cation pocket.

This sequence belongs to the polypeptide deformylase family. The cofactor is Fe(2+).

The enzyme catalyses N-terminal N-formyl-L-methionyl-[peptide] + H2O = N-terminal L-methionyl-[peptide] + formate. Its function is as follows. Removes the formyl group from the N-terminal Met of newly synthesized proteins. Requires at least a dipeptide for an efficient rate of reaction. N-terminal L-methionine is a prerequisite for activity but the enzyme has broad specificity at other positions. The polypeptide is Peptide deformylase (Bradyrhizobium sp. (strain BTAi1 / ATCC BAA-1182)).